Consider the following 595-residue polypeptide: MAAVDDATGLEAARKQKIHNLKLKTACLENEELVQELHVSDWSETQRQKLRGAHLKAEELVAAVDVGTKWNLTEVYDLAKLMRVCGLEMSQRELYRPEDKAQFMDIIAMKKVLQDLRQNRNKTRVVSFTQMIDNAIAKVEKVEEDVRRSQLDATQLAQVPTQTLKQVEDIMNVTQIQNALASTDDQIKTQLAHVEKTNEIQNVAMHDGEMQVAEEQMWTKVQLQERLIDLIQDKFRLISKCEEENQAFSKIHEVQKQANQETSQMKDAKRRLKQRCETDLKHIHDAIQKADLEDAEATKRHAANKEKSDRYIRENEDRQEETWNKIQDLERQLQKLGTERFDEVKRRIEEIDREEKRRVEYSQFLEVASQHKKLLELTVYNCDLAIRCTGLVEELVSEGCAAVKARHDKTSQDLAALRLDVHKEHLEYFRMLYLTLGSLIYKKEKRMEEIDRNIRTTHIQLEFCVETFDPNAKKHADMKKELYRLRQGVEEELAMLKEKQAKALEEFKESEEVSGRCWHRVQPPCDENNEEVLTRRSKMVEYRSHLTKQEEVKIAAEREEIKRALTAQLWCRWRAGPHRKQHCTHASNSVAAIIM.

Residues 294 to 317 are disordered; it reads DAEATKRHAANKEKSDRYIRENED. The tract at residues 317 to 337 is calmodulin-binding; that stretch reads DRQEETWNKIQDLERQLQKLG.

As to quaternary structure, heterodimer of a 69 kDa and a 73 kDa protein.

The protein localises to the cell projection. The protein resides in the cilium. Its subcellular location is the flagellum. It localises to the cytoplasm. It is found in the cytoskeleton. Its function is as follows. Major component of the paraflagellar rod (PFR). The PFR is a highly ordered lattices of fibrous proteins that are located inside the flagellum and assume a fixed orientation with respect to the microtubular axoneme. The protein is 73 kDa paraflagellar rod protein (PFRC) of Trypanosoma brucei brucei.